The following is a 512-amino-acid chain: MLLYFLVVAPLWMLSGLVRAEVWPSFSDEMIYAIRSQRDLMQNISIDQVPLPGLALKNSLPGSITSNETESLTTILSLLHHGIQSFRVDLTFNSSAGEWFLEGTNIRFVKMLNTVNLFVMATNTNLDANILTILLRFDNDTLRNSNAIKEANFTAILEEGLSPGYVYSIADLERDRELNQTLSINGYSDTGWVGLSRFLFDVKKRVVFGFLNGAELFSEDDQDNLVFPPETFHYVTANNITCPLNTVEDIMRVSQIQWRFLEGNFSYENYLHYLECGYSLILTNPIDTRNDSSQGTSLQRHLSSLLLWSWNATAPDDKLDESEDSDDSESSSTSQYVAYRCGAFSYNDYEDLDPFKIGNCYRNLPYLCRFSDRAYFWNISEDTGTYFESDDKDMCPTGYKFGVPRTPLQQRSLRIHLNDMDIDNLDFWIDINSISVSNCWITGGPYASCPYQKYGSRRNYIAMTVPTSAIALVLLLVIFYFNWVHVPIQDNRNNWKRIINAYSKEEVEGVPS.

Positions 1–20 (MLLYFLVVAPLWMLSGLVRA) are cleaved as a signal peptide. Residues 21–460 (EVWPSFSDEM…YQKYGSRRNY (440 aa)) lie on the Extracellular side of the membrane. N-linked (GlcNAc...) asparagine glycosylation is found at Asn-43, Asn-67, Asn-93, Asn-139, Asn-152, Asn-179, Asn-239, Asn-264, Asn-290, Asn-311, and Asn-378. The helical transmembrane segment at 461–481 (IAMTVPTSAIALVLLLVIFYF) threads the bilayer. Residues 482–512 (NWVHVPIQDNRNNWKRIINAYSKEEVEGVPS) lie on the Cytoplasmic side of the membrane.

It belongs to the MTC6 family.

Its subcellular location is the membrane. In terms of biological role, may be involved in telomere capping. The chain is Maintenance of telomere capping protein 6 (MTC6) from Kluyveromyces lactis (strain ATCC 8585 / CBS 2359 / DSM 70799 / NBRC 1267 / NRRL Y-1140 / WM37) (Yeast).